Consider the following 120-residue polypeptide: Small ribosomal subunit protein bS16 (120 aa).

Positions glycine 81–alanine 120 are disordered. Over residues glutamate 95–lysine 110 the composition is skewed to basic and acidic residues. Residues alanine 111–alanine 120 are compositionally biased toward low complexity.

The protein belongs to the bacterial ribosomal protein bS16 family.

The polypeptide is Small ribosomal subunit protein bS16 (Methylobacterium radiotolerans (strain ATCC 27329 / DSM 1819 / JCM 2831 / NBRC 15690 / NCIMB 10815 / 0-1)).